Consider the following 593-residue polypeptide: Serine/threonine-protein kinase PAK 4 (593 aa).

The region spanning 11-24 (ISAPSNFEHRVHTG) is the CRIB domain. The segment at 25 to 322 (FDQHEQKFTG…VVDPGDPRSY (298 aa)) is linker. At S41 the chain carries Phosphoserine. The residue at position 78 (K78) is an N6-methyllysine. The segment at 95–303 (TRSNSLRRES…PQREPQRVSH (209 aa)) is disordered. At S104 the chain carries Phosphoserine. The span at 118–133 (LEERAAPARMAPDKAG) shows a compositional bias: basic and acidic residues. At S148 the chain carries Phosphoserine. Residues 149 to 164 (GDRRRVGPEKRPKSSR) show a composition bias toward basic and acidic residues. The residue at position 181 (S181) is a Phosphoserine. The segment covering 184–197 (DVSTPQPGSLTSGT) has biased composition (polar residues). Position 187 is a phosphothreonine (T187). Position 195 is a phosphoserine (S195). T207 carries the phosphothreonine modification. Positions 238–258 (AAPQSSSSSRPPTRARGAPSP) are enriched in low complexity. Phosphoserine occurs at positions 257 and 266. The span at 267–280 (EPQLAPPARALAAP) shows a compositional bias: low complexity. Pro residues predominate over residues 281-292 (AVPPAPGPPGPR). S293 is subject to Phosphoserine. The segment covering 294–303 (PQREPQRVSH) has biased composition (basic and acidic residues). Positions 323–574 (LDNFIKIGEG…AAELLKHPFL (252 aa)) constitute a Protein kinase domain. Residues 329-337 (IGEGSTGIV) and K352 each bind ATP. D442 serves as the catalytic Proton acceptor. Phosphoserine; by autocatalysis is present on S476.

The protein belongs to the protein kinase superfamily. STE Ser/Thr protein kinase family. STE20 subfamily. In terms of assembly, interacts tightly with GTP-bound but not GDP-bound CDC42/p21 and weakly with RAC1. Interacts with FGFR2 and GRB2. Interacts with INKA1. Interacts with SH3RF2. Interacts with RHOU and PAXI; the PAK4-RHOU complex protects RHOU from ubiquitination and acts as a scaffold to suppport paxillin/PAXI phosphorylation. Post-translationally, autophosphorylated on serine residues when activated by CDC42/p21. Phosphorylated on tyrosine residues upon stimulation of FGFR2. Methylated by SETD6. Polyubiquitinated, leading to its proteasomal degradation.

The protein resides in the cytoplasm. It carries out the reaction L-seryl-[protein] + ATP = O-phospho-L-seryl-[protein] + ADP + H(+). It catalyses the reaction L-threonyl-[protein] + ATP = O-phospho-L-threonyl-[protein] + ADP + H(+). Inhibited by INKA1; which inhibits the serine/threonine-protein kinase activity by binding PAK4 in a substrate-like manner. Serine/threonine protein kinase that plays a role in a variety of different signaling pathways including cytoskeleton regulation, cell migration, growth, proliferation or cell survival. Activation by various effectors including growth factor receptors or active CDC42 and RAC1 results in a conformational change and a subsequent autophosphorylation on several serine and/or threonine residues. Phosphorylates and inactivates the protein phosphatase SSH1, leading to increased inhibitory phosphorylation of the actin binding/depolymerizing factor cofilin. Decreased cofilin activity may lead to stabilization of actin filaments. Phosphorylates LIMK1, a kinase that also inhibits the activity of cofilin. Phosphorylates integrin beta5/ITGB5 and thus regulates cell motility. Phosphorylates ARHGEF2 and activates the downstream target RHOA that plays a role in the regulation of assembly of focal adhesions and actin stress fibers. Stimulates cell survival by phosphorylating the BCL2 antagonist of cell death BAD. Alternatively, inhibits apoptosis by preventing caspase-8 binding to death domain receptors in a kinase independent manner. Plays a role in cell-cycle progression by controlling levels of the cell-cycle regulatory protein CDKN1A and by phosphorylating RAN. Promotes kinase-independent stabilization of RHOU, thereby contributing to focal adhesion disassembly during cell migration. The chain is Serine/threonine-protein kinase PAK 4 from Mus musculus (Mouse).